The chain runs to 86 residues: Large ribosomal subunit protein bL31B (86 aa).

It belongs to the bacterial ribosomal protein bL31 family. Type B subfamily. In terms of assembly, part of the 50S ribosomal subunit.

The protein is Large ribosomal subunit protein bL31B of Streptococcus equi subsp. equi (strain 4047).